The primary structure comprises 92 residues: UPF0237 protein MM_0082 (92 aa).

Residues 7–81 (IITVIGSDRV…KSLGVEVKVQ (75 aa)) enclose the ACT domain.

Belongs to the UPF0237 family.

This chain is UPF0237 protein MM_0082, found in Methanosarcina mazei (strain ATCC BAA-159 / DSM 3647 / Goe1 / Go1 / JCM 11833 / OCM 88) (Methanosarcina frisia).